A 47-amino-acid chain; its full sequence is Delta-actitoxin-Cgg1b (47 aa).

Residue P3 is modified to Hydroxyproline. Cystine bridges form between C4–C44, C6–C34, and C27–C45.

The protein belongs to the sea anemone sodium channel inhibitory toxin family. Type I subfamily.

Its subcellular location is the secreted. The protein localises to the nematocyst. Binds voltage-dependently at site 3 of sodium channels (Nav) and inhibits the inactivation, thereby blocking neuronal transmission. This Condylactis gigantea (Giant Caribbean anemone) protein is Delta-actitoxin-Cgg1b.